The primary structure comprises 208 residues: UPF0637 protein BCAH820_3975 (208 aa).

This sequence belongs to the UPF0637 family.

In Bacillus cereus (strain AH820), this protein is UPF0637 protein BCAH820_3975.